Consider the following 178-residue polypeptide: Protein GrpE (178 aa).

Belongs to the GrpE family. Homodimer.

It localises to the cytoplasm. Participates actively in the response to hyperosmotic and heat shock by preventing the aggregation of stress-denatured proteins, in association with DnaK and GrpE. It is the nucleotide exchange factor for DnaK and may function as a thermosensor. Unfolded proteins bind initially to DnaJ; upon interaction with the DnaJ-bound protein, DnaK hydrolyzes its bound ATP, resulting in the formation of a stable complex. GrpE releases ADP from DnaK; ATP binding to DnaK triggers the release of the substrate protein, thus completing the reaction cycle. Several rounds of ATP-dependent interactions between DnaJ, DnaK and GrpE are required for fully efficient folding. In Rickettsia typhi (strain ATCC VR-144 / Wilmington), this protein is Protein GrpE.